The following is a 235-amino-acid chain: NAD(P)H-hydrate epimerase (235 aa).

A YjeF N-terminal domain is found at 18-221; sequence AAKIDEQLFS…GLVEEHGLQM (204 aa). A (6S)-NADPHX-binding site is contributed by 65 to 69; the sequence is NNGGD. Residues asparagine 66 and aspartate 127 each contribute to the K(+) site. (6S)-NADPHX contacts are provided by residues 131–137 and aspartate 160; that span reads GFSFKPP. Serine 163 contributes to the K(+) binding site.

It belongs to the NnrE/AIBP family. The cofactor is K(+).

The enzyme catalyses (6R)-NADHX = (6S)-NADHX. The catalysed reaction is (6R)-NADPHX = (6S)-NADPHX. Catalyzes the epimerization of the S- and R-forms of NAD(P)HX, a damaged form of NAD(P)H that is a result of enzymatic or heat-dependent hydration. This is a prerequisite for the S-specific NAD(P)H-hydrate dehydratase to allow the repair of both epimers of NAD(P)HX. The polypeptide is NAD(P)H-hydrate epimerase (Caenorhabditis briggsae).